The primary structure comprises 229 residues: Cytochrome c oxidase subunit 2 (229 aa).

Residues 1-26 are Mitochondrial intermembrane-facing; it reads MSTWANLGLQDSASPLMEQLIFFHDH. The helical transmembrane segment at 27-48 threads the bilayer; sequence ALLILVMITVLVGYLMFMLFFN. Over 49–62 the chain is Mitochondrial matrix; it reads SYVNRFLLHGQLIE. Residues 63–82 form a helical membrane-spanning segment; that stretch reads MIWTILPAIILLFIAMPSLR. Residues 83 to 229 lie on the Mitochondrial intermembrane side of the membrane; sequence LLYLLDEINE…IKWISNSVNS (147 aa). Cu cation-binding residues include His-161, Cys-196, Glu-198, Cys-200, His-204, and Met-207. Glu-198 provides a ligand contact to Mg(2+).

The protein belongs to the cytochrome c oxidase subunit 2 family. In terms of assembly, component of the cytochrome c oxidase (complex IV, CIV), a multisubunit enzyme composed of a catalytic core of 3 subunits and several supernumerary subunits. The complex exists as a monomer or a dimer and forms supercomplexes (SCs) in the inner mitochondrial membrane with ubiquinol-cytochrome c oxidoreductase (cytochrome b-c1 complex, complex III, CIII). Cu cation is required as a cofactor.

It is found in the mitochondrion inner membrane. It catalyses the reaction 4 Fe(II)-[cytochrome c] + O2 + 8 H(+)(in) = 4 Fe(III)-[cytochrome c] + 2 H2O + 4 H(+)(out). Component of the cytochrome c oxidase, the last enzyme in the mitochondrial electron transport chain which drives oxidative phosphorylation. The respiratory chain contains 3 multisubunit complexes succinate dehydrogenase (complex II, CII), ubiquinol-cytochrome c oxidoreductase (cytochrome b-c1 complex, complex III, CIII) and cytochrome c oxidase (complex IV, CIV), that cooperate to transfer electrons derived from NADH and succinate to molecular oxygen, creating an electrochemical gradient over the inner membrane that drives transmembrane transport and the ATP synthase. Cytochrome c oxidase is the component of the respiratory chain that catalyzes the reduction of oxygen to water. Electrons originating from reduced cytochrome c in the intermembrane space (IMS) are transferred via the dinuclear copper A center (CU(A)) of subunit 2 and heme A of subunit 1 to the active site in subunit 1, a binuclear center (BNC) formed by heme A3 and copper B (CU(B)). The BNC reduces molecular oxygen to 2 water molecules using 4 electrons from cytochrome c in the IMS and 4 protons from the mitochondrial matrix. The chain is Cytochrome c oxidase subunit 2 (mt:CoII) from Drosophila narragansett (Fruit fly).